Reading from the N-terminus, the 325-residue chain is uncharacterized protein (325 aa).

Residue Tyr-59 is the Proton donor of the active site. Position 117 (His-117) interacts with substrate.

This sequence belongs to the aldo/keto reductase family.

Its subcellular location is the cytoplasm. The protein localises to the nucleus. This is an uncharacterized protein from Schizosaccharomyces pombe (strain 972 / ATCC 24843) (Fission yeast).